The following is a 132-amino-acid chain: Small ribosomal subunit protein uS8 (132 aa).

This sequence belongs to the universal ribosomal protein uS8 family. Part of the 30S ribosomal subunit. Contacts proteins S5 and S12.

Functionally, one of the primary rRNA binding proteins, it binds directly to 16S rRNA central domain where it helps coordinate assembly of the platform of the 30S subunit. This is Small ribosomal subunit protein uS8 from Treponema pallidum (strain Nichols).